A 185-amino-acid chain; its full sequence is Elongation factor P (185 aa).

This sequence belongs to the elongation factor P family.

Its subcellular location is the cytoplasm. It participates in protein biosynthesis; polypeptide chain elongation. Its function is as follows. Involved in peptide bond synthesis. Stimulates efficient translation and peptide-bond synthesis on native or reconstituted 70S ribosomes in vitro. Probably functions indirectly by altering the affinity of the ribosome for aminoacyl-tRNA, thus increasing their reactivity as acceptors for peptidyl transferase. This chain is Elongation factor P, found in Clostridioides difficile (strain 630) (Peptoclostridium difficile).